We begin with the raw amino-acid sequence, 199 residues long: MKIVLASANKGKIKEFERLLPNDEIVAFSEILGKIEIDEDKDTFKGNAIKKAQTIYDELQKINFGDVVVISDDSGISVPVLGNAPGVYSARYAGLNASDKENNEKLKAELNKLGLEKTPAFYTACIAIVYKNEVYTVHGWMYGEVLNKEIGTNGFGYDPMFIPNGYDKTLGELDEGVKKEFSHRSKALKLAMKVLEVIL.

Ser7–Lys12 is a substrate binding site. Positions 38 and 73 each coordinate Mg(2+). The active-site Proton acceptor is Asp73. Substrate-binding positions include Ser74, Phe155 to Asp158, Lys178, and His183 to Arg184.

It belongs to the HAM1 NTPase family. Homodimer. Requires Mg(2+) as cofactor.

It catalyses the reaction XTP + H2O = XMP + diphosphate + H(+). The enzyme catalyses dITP + H2O = dIMP + diphosphate + H(+). It carries out the reaction ITP + H2O = IMP + diphosphate + H(+). Functionally, pyrophosphatase that catalyzes the hydrolysis of nucleoside triphosphates to their monophosphate derivatives, with a high preference for the non-canonical purine nucleotides XTP (xanthosine triphosphate), dITP (deoxyinosine triphosphate) and ITP. Seems to function as a house-cleaning enzyme that removes non-canonical purine nucleotides from the nucleotide pool, thus preventing their incorporation into DNA/RNA and avoiding chromosomal lesions. This Aliarcobacter butzleri (strain RM4018) (Arcobacter butzleri) protein is dITP/XTP pyrophosphatase.